The chain runs to 388 residues: Chorismate synthase (388 aa).

Residues arginine 39 and arginine 45 each contribute to the NADP(+) site. Residues 130-132, 251-252, glycine 296, 311-315, and arginine 337 each bind FMN; these read RSS, NA, and KPIPT.

It belongs to the chorismate synthase family. In terms of assembly, homotetramer. FMNH2 is required as a cofactor.

The enzyme catalyses 5-O-(1-carboxyvinyl)-3-phosphoshikimate = chorismate + phosphate. The protein operates within metabolic intermediate biosynthesis; chorismate biosynthesis; chorismate from D-erythrose 4-phosphate and phosphoenolpyruvate: step 7/7. In terms of biological role, catalyzes the anti-1,4-elimination of the C-3 phosphate and the C-6 proR hydrogen from 5-enolpyruvylshikimate-3-phosphate (EPSP) to yield chorismate, which is the branch point compound that serves as the starting substrate for the three terminal pathways of aromatic amino acid biosynthesis. This reaction introduces a second double bond into the aromatic ring system. The chain is Chorismate synthase from Geobacillus kaustophilus (strain HTA426).